A 295-amino-acid chain; its full sequence is Acetylglutamate kinase (295 aa).

Residues 66–67, arginine 88, and asparagine 193 contribute to the substrate site; that span reads GG.

The protein belongs to the acetylglutamate kinase family. ArgB subfamily.

It localises to the cytoplasm. It carries out the reaction N-acetyl-L-glutamate + ATP = N-acetyl-L-glutamyl 5-phosphate + ADP. Its pathway is amino-acid biosynthesis; L-arginine biosynthesis; N(2)-acetyl-L-ornithine from L-glutamate: step 2/4. In terms of biological role, catalyzes the ATP-dependent phosphorylation of N-acetyl-L-glutamate. In Rhizobium etli (strain CIAT 652), this protein is Acetylglutamate kinase.